A 206-amino-acid polypeptide reads, in one-letter code: Ras-related protein Rab7 (206 aa).

Residues 15–22 (GDTGVGKT), 63–67 (DTAGQ), and 125–128 (NKID) each bind GTP. 2 S-geranylgeranyl cysteine lipidation sites follow: C204 and C206. Position 206 is a cysteine methyl ester (C206).

Belongs to the small GTPase superfamily. Rab family.

The protein localises to the cell membrane. Functionally, protein transport. Probably involved in vesicular traffic. This chain is Ras-related protein Rab7, found in Vigna aconitifolia (Moth bean).